A 406-amino-acid chain; its full sequence is Putative cyclin-F3-2 (406 aa).

The tract at residues 1–107 is disordered; that stretch reads MARPRTRSVA…PGAAGGPWQL (107 aa). Composition is skewed to low complexity over residues 11–21 and 29–57; these read RMEATAAAAAA and NPDG…NAGE.

Belongs to the cyclin family. Cyclin F subfamily.

This Oryza sativa subsp. japonica (Rice) protein is Putative cyclin-F3-2 (CYCF3-2).